The chain runs to 463 residues: Cysteine--tRNA ligase (463 aa).

Cys29 contacts Zn(2+). Positions 31–41 (PTVYDFAHIGN) match the 'HIGH' region motif. Cys227, His252, and Glu256 together coordinate Zn(2+). The 'KMSKS' region motif lies at 285–289 (KMSKS). Lys288 is an ATP binding site.

The protein belongs to the class-I aminoacyl-tRNA synthetase family. In terms of assembly, monomer. Zn(2+) serves as cofactor.

It is found in the cytoplasm. It carries out the reaction tRNA(Cys) + L-cysteine + ATP = L-cysteinyl-tRNA(Cys) + AMP + diphosphate. The sequence is that of Cysteine--tRNA ligase from Rhodopseudomonas palustris (strain ATCC BAA-98 / CGA009).